The primary structure comprises 290 residues: Lipid phosphate phosphatase 2 (290 aa).

Helical transmembrane passes span 26 to 46 (WLIL…EPFH), 69 to 89 (WAVP…YYFI), and 93 to 113 (VYDL…TGVI). Asn-142 carries an N-linked (GlcNAc...) asparagine glycan. Helical transmembrane passes span 162 to 182 (SFPS…SLYL), 193 to 213 (GHVA…LVGV), and 226 to 246 (VFGG…QFFP).

It belongs to the PA-phosphatase related phosphoesterase family. Expressed in roots, stems, leaves, buds, flowers and siliques.

The protein localises to the membrane. Its activity is regulated as follows. PA phosphatase activity not inhibited by N-ethylmaleimide. In terms of biological role, may play a general 'housekeeping role' in lipid metabolism. Exhibits both diacylglycerol pyrophosphate (DGPP) phosphatase and phosphatidate (PA) phosphatase activities with no preference for either substrate. May play a role downstream of the ABA signaling pathway during seed germination and in stomatal movement in leaves. The protein is Lipid phosphate phosphatase 2 (LPP2) of Arabidopsis thaliana (Mouse-ear cress).